The following is a 435-amino-acid chain: Serine--tRNA ligase (435 aa).

The segment at 41–70 (QVKTEELQAQRNSRSKSIGQAKAKGDHEEA) is disordered. Polar residues predominate over residues 49–58 (AQRNSRSKSI). 242–244 (TAE) contributes to the L-serine binding site. Residue 273–275 (RSE) participates in ATP binding. Glu-296 provides a ligand contact to L-serine. 360-363 (EISS) contacts ATP. Position 396 (Ser-396) interacts with L-serine.

This sequence belongs to the class-II aminoacyl-tRNA synthetase family. Type-1 seryl-tRNA synthetase subfamily. As to quaternary structure, homodimer. The tRNA molecule binds across the dimer.

It localises to the cytoplasm. It catalyses the reaction tRNA(Ser) + L-serine + ATP = L-seryl-tRNA(Ser) + AMP + diphosphate + H(+). It carries out the reaction tRNA(Sec) + L-serine + ATP = L-seryl-tRNA(Sec) + AMP + diphosphate + H(+). It functions in the pathway aminoacyl-tRNA biosynthesis; selenocysteinyl-tRNA(Sec) biosynthesis; L-seryl-tRNA(Sec) from L-serine and tRNA(Sec): step 1/1. Its function is as follows. Catalyzes the attachment of serine to tRNA(Ser). Is also able to aminoacylate tRNA(Sec) with serine, to form the misacylated tRNA L-seryl-tRNA(Sec), which will be further converted into selenocysteinyl-tRNA(Sec). The sequence is that of Serine--tRNA ligase from Aliivibrio fischeri (strain MJ11) (Vibrio fischeri).